A 212-amino-acid polypeptide reads, in one-letter code: Guanylate kinase (212 aa).

The 181-residue stretch at 7–187 (GLLIVLSGPS…AADRIIAIIR (181 aa)) folds into the Guanylate kinase-like domain. Residue 14-21 (GPSGVGKA) participates in ATP binding.

It belongs to the guanylate kinase family.

It is found in the cytoplasm. The enzyme catalyses GMP + ATP = GDP + ADP. In terms of biological role, essential for recycling GMP and indirectly, cGMP. This is Guanylate kinase from Onion yellows phytoplasma (strain OY-M).